Reading from the N-terminus, the 234-residue chain is Large ribosomal subunit protein uL1 (234 aa).

It belongs to the universal ribosomal protein uL1 family. Part of the 50S ribosomal subunit.

In terms of biological role, binds directly to 23S rRNA. The L1 stalk is quite mobile in the ribosome, and is involved in E site tRNA release. Its function is as follows. Protein L1 is also a translational repressor protein, it controls the translation of the L11 operon by binding to its mRNA. The protein is Large ribosomal subunit protein uL1 of Bdellovibrio bacteriovorus (strain ATCC 15356 / DSM 50701 / NCIMB 9529 / HD100).